We begin with the raw amino-acid sequence, 605 residues long: SET domain-containing protein SNOG_11806 (605 aa).

Positions 68–132 are disordered; that stretch reads TLDLTGMKTP…SRKGTGGLRV (65 aa). Over residues 75 to 89 the composition is skewed to polar residues; that stretch reads KTPQPSRSPTVTRNV. Over residues 104–115 the composition is skewed to acidic residues; sequence ESADDDDDDLQD. One can recognise an SET domain in the interval 473–579; sequence PPVQIYRTAE…AGSEITVDYG (107 aa).

Belongs to the class V-like SAM-binding methyltransferase superfamily.

This is SET domain-containing protein SNOG_11806 from Phaeosphaeria nodorum (strain SN15 / ATCC MYA-4574 / FGSC 10173) (Glume blotch fungus).